Here is a 460-residue protein sequence, read N- to C-terminus: Serine hydroxymethyltransferase, cytosolic (460 aa).

N6-(pyridoxal phosphate)lysine is present on Lys-244.

This sequence belongs to the SHMT family. In terms of assembly, homotetramer. Pyridoxal 5'-phosphate serves as cofactor.

Its subcellular location is the cytoplasm. The catalysed reaction is (6R)-5,10-methylene-5,6,7,8-tetrahydrofolate + glycine + H2O = (6S)-5,6,7,8-tetrahydrofolate + L-serine. The protein operates within one-carbon metabolism; tetrahydrofolate interconversion. In terms of biological role, interconversion of serine and glycine. In Encephalitozoon cuniculi (strain GB-M1) (Microsporidian parasite), this protein is Serine hydroxymethyltransferase, cytosolic (SHMT-1).